The sequence spans 456 residues: RuvB-like helicase 1 (456 aa).

ATP is bound at residue glycine 70–threonine 77.

This sequence belongs to the RuvB family. As to quaternary structure, forms homohexameric rings. May form a dodecamer with rept made of two stacked hexameric rings. Component of the chromatin remodeling Ino80 complex.

It is found in the nucleus. It carries out the reaction ATP + H2O = ADP + phosphate + H(+). Its function is as follows. Acts as a transcriptional coactivator in Wg signaling caused by altered arm signaling. Pont and rept interfere antagonistically with nuclear arm signaling function, and are required to enhance or reduce arm activity, respectively. Also an essential cofactor for the normal function of Myc; required for cellular proliferation and growth. Proposed core component of the chromatin remodeling Ino80 complex which is involved in transcriptional regulation, DNA replication and probably DNA repair. The chain is RuvB-like helicase 1 from Drosophila pseudoobscura pseudoobscura (Fruit fly).